A 232-amino-acid polypeptide reads, in one-letter code: Flagellar L-ring protein (232 aa).

Residues 1–15 (MKKVLFYVLPFAFFG) form the signal peptide. A lipid anchor (N-palmitoyl cysteine) is attached at Cys-16. Cys-16 carries the S-diacylglycerol cysteine lipid modification.

It belongs to the FlgH family. As to quaternary structure, the basal body constitutes a major portion of the flagellar organelle and consists of four rings (L,P,S, and M) mounted on a central rod.

The protein localises to the cell outer membrane. It is found in the bacterial flagellum basal body. Its function is as follows. Assembles around the rod to form the L-ring and probably protects the motor/basal body from shearing forces during rotation. The protein is Flagellar L-ring protein of Campylobacter jejuni subsp. jejuni serotype O:23/36 (strain 81-176).